Reading from the N-terminus, the 299-residue chain is Protoheme IX farnesyltransferase (299 aa).

9 helical membrane passes run 29–49, 51–71, 100–120, 123–143, 150–170, 177–197, 223–243, 244–264, and 275–295; these read VVTLMLLTVLVGMCLALPGAV, LQPLIAGMLGIAMMAGAAAAM, HAATFAALLALLGFACLYWLV, LTAWLTLASLLGYAVVYTAYL, NIVIGGLAGAMPPLLGWTAVT, GLLLVIIIFAWTPPHFWALAI, CIFLYTILLALACLLPVLVGM, SGALYLLGSTLLSIGFIYKAW, and AMDVFRFSIYHLMLLFILLLV.

It belongs to the UbiA prenyltransferase family. Protoheme IX farnesyltransferase subfamily.

The protein localises to the cell inner membrane. The enzyme catalyses heme b + (2E,6E)-farnesyl diphosphate + H2O = Fe(II)-heme o + diphosphate. It participates in porphyrin-containing compound metabolism; heme O biosynthesis; heme O from protoheme: step 1/1. Converts heme B (protoheme IX) to heme O by substitution of the vinyl group on carbon 2 of heme B porphyrin ring with a hydroxyethyl farnesyl side group. This Shewanella amazonensis (strain ATCC BAA-1098 / SB2B) protein is Protoheme IX farnesyltransferase.